We begin with the raw amino-acid sequence, 32 residues long: Alpha-2-macroglobulin homolog (32 aa).

The segment at residues 16–19 (CGEQ) is a cross-link (isoglutamyl cysteine thioester (Cys-Gln)).

Belongs to the protease inhibitor I39 (alpha-2-macroglobulin) family. In terms of assembly, homodimer; disulfide-linked.

The protein resides in the secreted. Its function is as follows. Is able to inhibit all four classes of proteinases by a unique 'trapping' mechanism. This protein has a peptide stretch, called the 'bait region' which contains specific cleavage sites for different proteinases. When a proteinase cleaves the bait region, a conformational change is induced in the protein which traps the proteinase. The entrapped enzyme remains active against low molecular weight substrates (activity against high molecular weight substrates is greatly reduced). Following cleavage in the bait region a thioester bond is hydrolyzed and mediates the covalent binding of the protein to the proteinase. In Pacifastacus leniusculus (Signal crayfish), this protein is Alpha-2-macroglobulin homolog.